Here is a 230-residue protein sequence, read N- to C-terminus: Interleukin-6 (230 aa).

The first 24 residues, 1–24, serve as a signal peptide directing secretion; that stretch reads MASKHNADLSSAAMLAALLLCALG. C96 and C106 are joined by a disulfide. An N-linked (GlcNAc...) asparagine glycan is attached at N100. Over residues 206-218 the composition is skewed to basic and acidic residues; that stretch reads REMPKQKRRKDDG. The disordered stretch occupies residues 206-230; sequence REMPKQKRRKDDGIIPPIHPSYQMT.

It belongs to the IL-6 superfamily. Component of a hexamer of two molecules each of IL6, IL6R and IL6ST; first binds to IL6R to associate with the signaling subunit IL6ST. As to expression, expressed in kidney and spleen. Low expression in liver and gills.

It localises to the secreted. In terms of biological role, cytokine with a wide variety of biological functions in immunity, tissue regeneration, and metabolism. Binds to IL6R, then the complex associates to the signaling subunit IL6ST/gp130 to trigger the intracellular IL6-signaling pathway. The interaction with the membrane-bound IL6R and IL6ST stimulates 'classic signaling', whereas the binding of IL6 and soluble IL6R to IL6ST stimulates 'trans-signaling'. Alternatively, 'cluster signaling' occurs when membrane-bound IL6:IL6R complexes on transmitter cells activate IL6ST receptors on neighboring receiver cells. The sequence is that of Interleukin-6 (il6) from Paralichthys olivaceus (Bastard halibut).